The chain runs to 228 residues: MPAFFVTGTDTEIGKTTIAAGLLHAARRAGLSTAAAKPVASGCEPTAQGLRNGDALALLGQCSLALAYEQVNPLAFAPAIAPHLAAREAGVELSAARLHEAVREVLALQADLTLVEGAGGWRVPLQGRENLSDLARLLALPVVLVVGVRLGCINHALLSAEAILGDGLALAGWVANVVDPATSRLEENLATLAERLPAPCLGRVPRLEEATPAAVAAHLDLRPLGIGL.

Residue 12–17 (EIGKTT) participates in ATP binding. Residue threonine 16 participates in Mg(2+) binding. Lysine 37 is an active-site residue. Serine 41 contributes to the substrate binding site. ATP contacts are provided by residues aspartate 54, 116-119 (EGAG), and 205-207 (PRL). Mg(2+) contacts are provided by aspartate 54 and glutamate 116.

The protein belongs to the dethiobiotin synthetase family. As to quaternary structure, homodimer. Mg(2+) is required as a cofactor.

The protein localises to the cytoplasm. The enzyme catalyses (7R,8S)-7,8-diammoniononanoate + CO2 + ATP = (4R,5S)-dethiobiotin + ADP + phosphate + 3 H(+). It functions in the pathway cofactor biosynthesis; biotin biosynthesis; biotin from 7,8-diaminononanoate: step 1/2. Functionally, catalyzes a mechanistically unusual reaction, the ATP-dependent insertion of CO2 between the N7 and N8 nitrogen atoms of 7,8-diaminopelargonic acid (DAPA, also called 7,8-diammoniononanoate) to form a ureido ring. The chain is ATP-dependent dethiobiotin synthetase BioD from Pseudomonas aeruginosa (strain UCBPP-PA14).